A 453-amino-acid polypeptide reads, in one-letter code: Pup--protein ligase (453 aa).

E9 provides a ligand contact to Mg(2+). R53 provides a ligand contact to ATP. Residue Y55 participates in Mg(2+) binding. D57 acts as the Proton acceptor in catalysis. E63 contributes to the Mg(2+) binding site. ATP contacts are provided by T66 and W420.

This sequence belongs to the Pup ligase/Pup deamidase family. Pup-conjugating enzyme subfamily.

It catalyses the reaction ATP + [prokaryotic ubiquitin-like protein]-L-glutamate + [protein]-L-lysine = ADP + phosphate + N(6)-([prokaryotic ubiquitin-like protein]-gamma-L-glutamyl)-[protein]-L-lysine.. It participates in protein degradation; proteasomal Pup-dependent pathway. Its pathway is protein modification; protein pupylation. In terms of biological role, catalyzes the covalent attachment of the prokaryotic ubiquitin-like protein modifier Pup to the proteasomal substrate proteins, thereby targeting them for proteasomal degradation. This tagging system is termed pupylation. The ligation reaction involves the side-chain carboxylate of the C-terminal glutamate of Pup and the side-chain amino group of a substrate lysine. This chain is Pup--protein ligase, found in Streptomyces coelicolor (strain ATCC BAA-471 / A3(2) / M145).